A 547-amino-acid chain; its full sequence is Chaperonin GroEL (547 aa).

Residues 30-33, lysine 51, 87-91, glycine 415, and aspartate 495 contribute to the ATP site; these read TLGP and DGTTT. The disordered stretch occupies residues 526–547; the sequence is QDATPTASPDMGGMGGMGGGMM. Residues 537 to 547 are compositionally biased toward gly residues; that stretch reads GGMGGMGGGMM.

It belongs to the chaperonin (HSP60) family. As to quaternary structure, forms a cylinder of 14 subunits composed of two heptameric rings stacked back-to-back. Interacts with the co-chaperonin GroES.

It localises to the cytoplasm. The catalysed reaction is ATP + H2O + a folded polypeptide = ADP + phosphate + an unfolded polypeptide.. Together with its co-chaperonin GroES, plays an essential role in assisting protein folding. The GroEL-GroES system forms a nano-cage that allows encapsulation of the non-native substrate proteins and provides a physical environment optimized to promote and accelerate protein folding. The protein is Chaperonin GroEL of Vesicomyosocius okutanii subsp. Calyptogena okutanii (strain HA).